The sequence spans 489 residues: Glycogen synthase (489 aa).

Arg-20 contacts ADP-alpha-D-glucose.

The protein belongs to the glycosyltransferase 1 family. Bacterial/plant glycogen synthase subfamily.

The catalysed reaction is [(1-&gt;4)-alpha-D-glucosyl](n) + ADP-alpha-D-glucose = [(1-&gt;4)-alpha-D-glucosyl](n+1) + ADP + H(+). It participates in glycan biosynthesis; glycogen biosynthesis. Its function is as follows. Synthesizes alpha-1,4-glucan chains using ADP-glucose. This chain is Glycogen synthase, found in Chlorobium limicola (strain DSM 245 / NBRC 103803 / 6330).